We begin with the raw amino-acid sequence, 67 residues long: Conotoxin Im3.1 (67 aa).

Positions 1–20 are cleaved as a signal peptide; that stretch reads MMSTLVVLLTICLLMLPLTA. Residues 21 to 52 constitute a propeptide that is removed on maturation; the sequence is RQLDADQLADQLAERMEDISADQNRWFDPVKR. Disulfide bonds link Cys-53–Cys-63, Cys-54–Cys-61, and Cys-59–Cys-64.

The protein belongs to the conotoxin M superfamily. Expressed by the venom duct.

Its subcellular location is the secreted. Probable neurotoxin. The sequence is that of Conotoxin Im3.1 from Conus imperialis (Imperial cone).